A 383-amino-acid chain; its full sequence is Bifunctional enzyme IspD/IspF (383 aa).

The segment at 1 to 226 is 2-C-methyl-D-erythritol 4-phosphate cytidylyltransferase; the sequence is MKIAAVIVAA…ERQIMSETIT (226 aa). The 2-C-methyl-D-erythritol 2,4-cyclodiphosphate synthase stretch occupies residues 227–383; the sequence is VTGQGYDVHR…QAIVTARLTT (157 aa). A divalent metal cation is bound by residues D233 and H235. 4-CDP-2-C-methyl-D-erythritol 2-phosphate is bound by residues 233–235 and 259–260; these read DVH and HS. H267 contacts a divalent metal cation. Residues 281–283, 357–360, F364, and R367 each bind 4-CDP-2-C-methyl-D-erythritol 2-phosphate; these read DIG and TTTE.

The protein in the N-terminal section; belongs to the IspD/TarI cytidylyltransferase family. IspD subfamily. It in the C-terminal section; belongs to the IspF family. Requires a divalent metal cation as cofactor.

The enzyme catalyses 2-C-methyl-D-erythritol 4-phosphate + CTP + H(+) = 4-CDP-2-C-methyl-D-erythritol + diphosphate. It carries out the reaction 4-CDP-2-C-methyl-D-erythritol 2-phosphate = 2-C-methyl-D-erythritol 2,4-cyclic diphosphate + CMP. It functions in the pathway isoprenoid biosynthesis; isopentenyl diphosphate biosynthesis via DXP pathway; isopentenyl diphosphate from 1-deoxy-D-xylulose 5-phosphate: step 2/6. The protein operates within isoprenoid biosynthesis; isopentenyl diphosphate biosynthesis via DXP pathway; isopentenyl diphosphate from 1-deoxy-D-xylulose 5-phosphate: step 4/6. Its function is as follows. Bifunctional enzyme that catalyzes the formation of 4-diphosphocytidyl-2-C-methyl-D-erythritol from CTP and 2-C-methyl-D-erythritol 4-phosphate (MEP) (IspD), and catalyzes the conversion of 4-diphosphocytidyl-2-C-methyl-D-erythritol 2-phosphate (CDP-ME2P) to 2-C-methyl-D-erythritol 2,4-cyclodiphosphate (ME-CPP) with a corresponding release of cytidine 5-monophosphate (CMP) (IspF). The polypeptide is Bifunctional enzyme IspD/IspF (Maricaulis maris (strain MCS10) (Caulobacter maris)).